The chain runs to 278 residues: Large ribosomal subunit protein uL2 (278 aa).

Disordered stretches follow at residues 29-53 and 223-278; these read PEKS…TTRH and GVAM…GKKR. Positions 255 to 268 are enriched in basic and acidic residues; the sequence is GRTRRPGKESDKLI. A compositionally biased stretch (basic residues) spans 269–278; that stretch reads VRRRRTGKKR.

Belongs to the universal ribosomal protein uL2 family. In terms of assembly, part of the 50S ribosomal subunit. Forms a bridge to the 30S subunit in the 70S ribosome.

One of the primary rRNA binding proteins. Required for association of the 30S and 50S subunits to form the 70S ribosome, for tRNA binding and peptide bond formation. It has been suggested to have peptidyltransferase activity; this is somewhat controversial. Makes several contacts with the 16S rRNA in the 70S ribosome. The protein is Large ribosomal subunit protein uL2 of Kineococcus radiotolerans (strain ATCC BAA-149 / DSM 14245 / SRS30216).